Consider the following 299-residue polypeptide: Polyamine aminopropyltransferase (299 aa).

The 247-residue stretch at 6 to 252 folds into the PABS domain; it reads IVLLFALLCT…SLPNQQALQQ (247 aa). S-methyl-5'-thioadenosine is bound by residues glutamine 36, glutamate 120, and 147–148; that span reads DA. Aspartate 168 (proton acceptor) is an active-site residue.

This sequence belongs to the spermidine/spermine synthase family. As to quaternary structure, homodimer or homotetramer.

It is found in the cytoplasm. The catalysed reaction is S-adenosyl 3-(methylsulfanyl)propylamine + putrescine = S-methyl-5'-thioadenosine + spermidine + H(+). Its pathway is amine and polyamine biosynthesis; spermidine biosynthesis; spermidine from putrescine: step 1/1. Catalyzes the irreversible transfer of a propylamine group from the amino donor S-adenosylmethioninamine (decarboxy-AdoMet) to putrescine (1,4-diaminobutane) to yield spermidine. The polypeptide is Polyamine aminopropyltransferase (Vibrio vulnificus (strain CMCP6)).